Consider the following 132-residue polypeptide: MSLTDPVADFLTRIRNAIRARHQKLDVPASKLKAEIARILKEEGYIANYKTTEEEGRAILRVYLKYGSNNEAAIRDLSRVSRPGCRVYIGRDEIKRVQGGLGISIMTTPRGVMTGRQARREGVGGEILCEVW.

It belongs to the universal ribosomal protein uS8 family. In terms of assembly, part of the 30S ribosomal subunit. Contacts proteins S5 and S12.

Its function is as follows. One of the primary rRNA binding proteins, it binds directly to 16S rRNA central domain where it helps coordinate assembly of the platform of the 30S subunit. The polypeptide is Small ribosomal subunit protein uS8 (Acidobacterium capsulatum (strain ATCC 51196 / DSM 11244 / BCRC 80197 / JCM 7670 / NBRC 15755 / NCIMB 13165 / 161)).